The following is a 280-amino-acid chain: Protein FAM131C (280 aa).

Residues 195–280 (QDSLPSGPSQ…LWEEDEVFYN (86 aa)) are disordered. Residues 197–211 (SLPSGPSQDDSLQAF) show a composition bias toward polar residues. A compositionally biased stretch (pro residues) spans 215-227 (SPSPDSCPSPEEP).

The protein belongs to the FAM131 family.

In Homo sapiens (Human), this protein is Protein FAM131C (FAM131C).